A 488-amino-acid chain; its full sequence is Cobyric acid synthase (488 aa).

The 188-residue stretch at 255 to 442 (ALKIAVPVLP…LHGLFGSDAY (188 aa)) folds into the GATase cobBQ-type domain. The Nucleophile role is filled by Cys337. The active site involves His434.

It belongs to the CobB/CobQ family. CobQ subfamily.

It participates in cofactor biosynthesis; adenosylcobalamin biosynthesis. Catalyzes amidations at positions B, D, E, and G on adenosylcobyrinic A,C-diamide. NH(2) groups are provided by glutamine, and one molecule of ATP is hydrogenolyzed for each amidation. The protein is Cobyric acid synthase of Rhizobium johnstonii (strain DSM 114642 / LMG 32736 / 3841) (Rhizobium leguminosarum bv. viciae).